Here is a 421-residue protein sequence, read N- to C-terminus: Subtilisin-like protease 2 (421 aa).

An N-terminal signal peptide occupies residues 1–16 (MQLLNFGLLLLPFVAG). A propeptide spanning residues 17 to 122 (DLAPQPEPLL…VHPDQHVYLA (106 aa)) is cleaved from the precursor. The region spanning 36-122 (QYIVTLKEGL…VHPDQHVYLA (87 aa)) is the Inhibitor I9 domain. A Peptidase S8 domain is found at 131-421 (RWGLGYMSSK…ERKFTLPKYY (291 aa)). Residues D169 and H201 each act as charge relay system in the active site. N-linked (GlcNAc...) asparagine glycans are attached at residues N248, N261, and N348. Residue S357 is the Charge relay system of the active site. N388 is a glycosylation site (N-linked (GlcNAc...) asparagine).

It belongs to the peptidase S8 family.

The protein resides in the secreted. Secreted subtilisin-like serine protease with keratinolytic activity that contributes to pathogenicity. The polypeptide is Subtilisin-like protease 2 (SUB2) (Arthroderma benhamiae (strain ATCC MYA-4681 / CBS 112371) (Trichophyton mentagrophytes)).